Reading from the N-terminus, the 369-residue chain is Anhydro-N-acetylmuramic acid kinase (369 aa).

12-19 provides a ligand contact to ATP; sequence GTSLDGVD.

Belongs to the anhydro-N-acetylmuramic acid kinase family.

The catalysed reaction is 1,6-anhydro-N-acetyl-beta-muramate + ATP + H2O = N-acetyl-D-muramate 6-phosphate + ADP + H(+). Its pathway is amino-sugar metabolism; 1,6-anhydro-N-acetylmuramate degradation. It functions in the pathway cell wall biogenesis; peptidoglycan recycling. Catalyzes the specific phosphorylation of 1,6-anhydro-N-acetylmuramic acid (anhMurNAc) with the simultaneous cleavage of the 1,6-anhydro ring, generating MurNAc-6-P. Is required for the utilization of anhMurNAc either imported from the medium or derived from its own cell wall murein, and thus plays a role in cell wall recycling. The protein is Anhydro-N-acetylmuramic acid kinase of Escherichia coli O81 (strain ED1a).